We begin with the raw amino-acid sequence, 321 residues long: NADPH-dependent codeinone reductase 1-4 (321 aa).

NADPH is bound by residues Thr-27 and Asp-51. Catalysis depends on proton donor residues Tyr-56 and His-119. His-119 contributes to the substrate binding site. NADPH is bound by residues Ser-165, Gln-187, Ser-214, Leu-216, Ser-264, and Arg-269. A disordered region spans residues 299–321 (SADFLLSPTGPFKTEEEFWDEKD).

Belongs to the aldo/keto reductase family. As to expression, latex secreting cells (laticifer cells). Expressed constitutively in all organs with highest levels in capsules. Restricted to the parietal region of sieve elements adjacent or proximal to laticifers in roots, stems, leaves and carpels.

The protein localises to the cytoplasm. Its subcellular location is the cytosol. It carries out the reaction codeine + NADP(+) = codeinone + NADPH + H(+). The enzyme catalyses neopine + NADP(+) = neopinone + NADPH + H(+). The catalysed reaction is morphine + NADP(+) = morphinone + NADPH + H(+). It catalyses the reaction neomorphine + NADP(+) = neomorphinone + NADPH + H(+). It participates in alkaloid biosynthesis; morphine biosynthesis. NADPH-dependent codeinone reductase involved in biosynthesis of morphinan-type benzylisoquinoline and opiate alkaloids natural products. Reduces codeinone to codeine in the penultimate step in morphine biosynthesis. Can use morphinone, hydrocodone and hydromorphone as substrate during reductive reaction with NADPH as cofactor, and morphine and dihydrocodeine as substrate during oxidative reaction with NADP as cofactor. Converts morphinone to morphine, and neomorphinone to neomorphine. Reduces irreversibly neopinone, a spontaneous isomer of codeinone, to neopine; in planta, neopine levels are limited to low levels. The chain is NADPH-dependent codeinone reductase 1-4 from Papaver somniferum (Opium poppy).